The primary structure comprises 584 residues: Phosphoinositide phospholipase C 7 (584 aa).

Residues 26-102 (EIKTLFDNYS…NSPLSSLEVH (77 aa)) form the EF-hand-like domain. Residues 103–248 (QDMDAPLSHY…LKKRIMISTK (146 aa)) form the PI-PLC X-box domain. Active-site residues include His118 and His164. Positions 285–318 (DRSVDKNDSNGDDDDDDDDDDDDDDGDDKIKKNA) are disordered. Position 287 is a phosphoserine (Ser287). Over residues 294–311 (NGDDDDDDDDDDDDDDGD) the composition is skewed to acidic residues. Residues 323-439 (KHLIAIEAGK…GYIKKPDLLL (117 aa)) form the PI-PLC Y-box domain. The region spanning 433-566 (KKPDLLLKSN…QGIRAVPLRN (134 aa)) is the C2 domain.

It depends on Ca(2+) as a cofactor. As to expression, expressed in leaves, roots, flowers and siliques.

The protein resides in the cell membrane. It catalyses the reaction a 1,2-diacyl-sn-glycero-3-phospho-(1D-myo-inositol-4,5-bisphosphate) + H2O = 1D-myo-inositol 1,4,5-trisphosphate + a 1,2-diacyl-sn-glycerol + H(+). The production of the second messenger molecules diacylglycerol (DAG) and inositol 1,4,5-trisphosphate (IP3) is mediated by activated phosphatidylinositol-specific phospholipase C enzymes. The protein is Phosphoinositide phospholipase C 7 (PLC7) of Arabidopsis thaliana (Mouse-ear cress).